The chain runs to 317 residues: MIIVTGGAGFIGSNIIKALNQGGREDILVVDDLTQGEKFSNLIDCEIWDYWDKQPFLQAIKAGEEFPHPVDAFIHQGACSATTEWNGRYMMENNFYYSKRLLHYCLERRIPFLYASSAAVYGCGLTFQEHREFEAPRNVYGYSKWLFDQYVRRYLPTASSQIVGLRYFNIYGPREAHKGAMASVAYHAHCQLKETGRIKLFEGCDGYEHGEQRRDFVSVADAAAVNLWFLEHPNQSGIFNVGTGQAQTFNEVAQAVLAFHGHGEIEYIPFPDHLRGRYQSFTQADIHALREAGYAEPFALVEKGVKTYLDWLGKNQD.

NADP(+)-binding positions include 10-11 (FI), 31-32 (DD), K38, K53, 76-80 (QGACS), and N93. Y140 serves as the catalytic Proton acceptor. K144 is a binding site for NADP(+). N169 lines the substrate pocket. NADP(+)-binding residues include I170 and K178. K178 acts as the Proton acceptor in catalysis. Substrate contacts are provided by residues A180, H187, 201–204 (FEGC), R214, and Y278.

Belongs to the NAD(P)-dependent epimerase/dehydratase family. HldD subfamily. Homopentamer. The cofactor is NADP(+).

The enzyme catalyses ADP-D-glycero-beta-D-manno-heptose = ADP-L-glycero-beta-D-manno-heptose. The protein operates within nucleotide-sugar biosynthesis; ADP-L-glycero-beta-D-manno-heptose biosynthesis; ADP-L-glycero-beta-D-manno-heptose from D-glycero-beta-D-manno-heptose 7-phosphate: step 4/4. Its function is as follows. Catalyzes the interconversion between ADP-D-glycero-beta-D-manno-heptose and ADP-L-glycero-beta-D-manno-heptose via an epimerization at carbon 6 of the heptose. The polypeptide is ADP-L-glycero-D-manno-heptose-6-epimerase (Nitrosococcus oceani (strain ATCC 19707 / BCRC 17464 / JCM 30415 / NCIMB 11848 / C-107)).